A 128-amino-acid chain; its full sequence is MLTYALVALGSAIGGTLRYWLSMVIAEASAGTFPWATLVINVAGSAAIGLFATLTSVDGRVFVPSEWRTFFMVGICGGFTTFSSFSLQTLALAQDGDWLAAGLNVVGSVALCLLAVWLGHVAATIINR.

Helical transmembrane passes span 5 to 25 (ALVA…SMVI), 32 to 52 (TFPW…GLFA), 70 to 90 (FFMV…LQTL), and 106 to 126 (VGSV…ATII). Positions 77 and 80 each coordinate Na(+).

It belongs to the fluoride channel Fluc/FEX (TC 1.A.43) family.

Its subcellular location is the cell inner membrane. The enzyme catalyses fluoride(in) = fluoride(out). Its activity is regulated as follows. Na(+) is not transported, but it plays an essential structural role and its presence is essential for fluoride channel function. Its function is as follows. Fluoride-specific ion channel. Important for reducing fluoride concentration in the cell, thus reducing its toxicity. This chain is Fluoride-specific ion channel FluC, found in Paramagnetospirillum magneticum (strain ATCC 700264 / AMB-1) (Magnetospirillum magneticum).